The following is a 472-amino-acid chain: Ribosomal protein uS12 methylthiotransferase RimO (472 aa).

The MTTase N-terminal domain occupies 33–143; the sequence is NRIGFVSLGC…VLKHVHKYVP (111 aa). [4Fe-4S] cluster-binding residues include cysteine 42, cysteine 78, cysteine 107, cysteine 175, cysteine 179, and cysteine 182. Residues 161 to 398 form the Radical SAM core domain; sequence LTPKHYAYLK…MELQAEISAE (238 aa). One can recognise a TRAM domain in the interval 401 to 467; the sequence is ARFVGRTLDI…EHDLWAEVVD (67 aa).

This sequence belongs to the methylthiotransferase family. RimO subfamily. [4Fe-4S] cluster serves as cofactor.

It localises to the cytoplasm. The catalysed reaction is L-aspartate(89)-[ribosomal protein uS12]-hydrogen + (sulfur carrier)-SH + AH2 + 2 S-adenosyl-L-methionine = 3-methylsulfanyl-L-aspartate(89)-[ribosomal protein uS12]-hydrogen + (sulfur carrier)-H + 5'-deoxyadenosine + L-methionine + A + S-adenosyl-L-homocysteine + 2 H(+). Catalyzes the methylthiolation of an aspartic acid residue of ribosomal protein uS12. The polypeptide is Ribosomal protein uS12 methylthiotransferase RimO (Shewanella sp. (strain W3-18-1)).